A 183-amino-acid chain; its full sequence is Oligoribonuclease (183 aa).

Residues 9–172 (LIWIDLEMTG…DDIRDSISEL (164 aa)) form the Exonuclease domain. The active site involves Tyr-130.

It belongs to the oligoribonuclease family.

The protein localises to the cytoplasm. Its function is as follows. 3'-to-5' exoribonuclease specific for small oligoribonucleotides. The sequence is that of Oligoribonuclease from Acinetobacter baylyi (strain ATCC 33305 / BD413 / ADP1).